A 404-amino-acid polypeptide reads, in one-letter code: MTVKTPVYLDYAATTPVDKRVAEKMIPYLTETFGNPASNSHAFGWEAEEAVEKARADIAALINADPKEIVFTSGATESDNLAIKGAANFYKTKGKHLITVKTEHKAVLDTMRELERQGFEVTYLGVQENGLIDLEELKAAIRDDTILISVMWVNNEIGVVQDIPAIGEICRERKIVFHVDAAQACGKVPVDVEAAKIDLLSMSAHKVYGPKGIGALYVRRKPRVRLEAQMHGGGHERGFRSGTLPTHQIVGMGEAFRIAKEELEQDMAHYRKLRDIFLKGIEGIEEVYVNGDLEHRAPNNLNVSFNFVEGESLIMAVKELAVSSGSACTSASLEPSYVLRALGRNDELAHSSLRITFGRMTTEEEVQFAAELIKSKIGKLRELSPLWEMFKDGIDLNSIEWAAH.

Pyridoxal 5'-phosphate-binding positions include 75-76 (AT), N155, Q183, and 203-205 (SAH). K206 is subject to N6-(pyridoxal phosphate)lysine. A pyridoxal 5'-phosphate-binding site is contributed by T243. C328 acts as the Cysteine persulfide intermediate in catalysis. Residue C328 coordinates [2Fe-2S] cluster.

It belongs to the class-V pyridoxal-phosphate-dependent aminotransferase family. NifS/IscS subfamily. Homodimer. Forms a heterotetramer with IscU, interacts with other sulfur acceptors. The cofactor is pyridoxal 5'-phosphate.

The protein localises to the cytoplasm. It carries out the reaction (sulfur carrier)-H + L-cysteine = (sulfur carrier)-SH + L-alanine. It participates in cofactor biosynthesis; iron-sulfur cluster biosynthesis. Its function is as follows. Master enzyme that delivers sulfur to a number of partners involved in Fe-S cluster assembly, tRNA modification or cofactor biosynthesis. Catalyzes the removal of elemental sulfur atoms from cysteine to produce alanine. Functions as a sulfur delivery protein for Fe-S cluster synthesis onto IscU, an Fe-S scaffold assembly protein, as well as other S acceptor proteins. The sequence is that of Cysteine desulfurase IscS from Neisseria meningitidis serogroup C (strain 053442).